A 509-amino-acid chain; its full sequence is Lysine--tRNA ligase (509 aa).

2 residues coordinate Mg(2+): glutamate 418 and glutamate 425.

It belongs to the class-II aminoacyl-tRNA synthetase family. In terms of assembly, homodimer. Mg(2+) is required as a cofactor.

The protein resides in the cytoplasm. It carries out the reaction tRNA(Lys) + L-lysine + ATP = L-lysyl-tRNA(Lys) + AMP + diphosphate. This chain is Lysine--tRNA ligase, found in Acinetobacter baumannii (strain AB307-0294).